Consider the following 77-residue polypeptide: MSPKMQALLLLLGLITLLVVHAEEELSENTESERGCIKLNQECVQNKTPCCNNRPCLCYMRFNICLCEKPLGEIFGR.

An N-terminal signal peptide occupies residues 1-22; it reads MSPKMQALLLLLGLITLLVVHA. Positions 23–34 are excised as a propeptide; the sequence is EEELSENTESER. 4 cysteine pairs are disulfide-bonded: cysteine 36-cysteine 51, cysteine 43-cysteine 56, cysteine 50-cysteine 67, and cysteine 58-cysteine 65.

This sequence belongs to the neurotoxin 02 (plectoxin) family. Expressed by the venom gland.

It localises to the secreted. The sequence is that of U18-lycotoxin-Ls1a from Lycosa singoriensis (Wolf spider).